A 263-amino-acid chain; its full sequence is uncharacterized protein (263 aa).

Positions Thr6–Lys121 constitute a Response regulatory domain. At Asp58 the chain carries 4-aspartylphosphate. One can recognise an HTH LytTR-type domain in the interval Ile158–Met263.

This is an uncharacterized protein from Vibrio parahaemolyticus serotype O3:K6 (strain RIMD 2210633).